A 433-amino-acid chain; its full sequence is Pyrimidine-nucleoside phosphorylase (433 aa).

Residue 81–83 participates in phosphate binding; that stretch reads KHS. Glycine 88 and threonine 90 together coordinate K(+). Residues threonine 92, 108-110, and threonine 120 each bind phosphate; that span reads KMS. Arginine 168 and lysine 187 together coordinate substrate. The K(+) site is built by leucine 243, alanine 246, and glutamate 255.

Belongs to the thymidine/pyrimidine-nucleoside phosphorylase family. Homodimer. It depends on K(+) as a cofactor.

The enzyme catalyses uridine + phosphate = alpha-D-ribose 1-phosphate + uracil. The catalysed reaction is thymidine + phosphate = 2-deoxy-alpha-D-ribose 1-phosphate + thymine. It carries out the reaction 2'-deoxyuridine + phosphate = 2-deoxy-alpha-D-ribose 1-phosphate + uracil. Functionally, catalyzes phosphorolysis of the pyrimidine nucleosides uridine, thymidine and 2'-deoxyuridine with the formation of the corresponding pyrimidine base and ribose-1-phosphate. This Staphylococcus aureus (strain MSSA476) protein is Pyrimidine-nucleoside phosphorylase (pdp).